The chain runs to 140 residues: uncharacterized protein (140 aa).

An HTH cro/C1-type domain is found at isoleucine 26–leucine 80. A DNA-binding region (H-T-H motif) is located at residues methionine 37–arginine 56.

This is an uncharacterized protein from Mycobacterium tuberculosis (strain ATCC 25618 / H37Rv).